The primary structure comprises 644 residues: Anti-sigma-I factor RsgI3 (644 aa).

At 1 to 56 (MDNIGVIIKIEGNEAIVMTDDCSFKKVPIKDGMHPGQKILVPNNEVIQKENKSIKR) the chain is on the cytoplasmic side. In terms of domain architecture, RsgI N-terminal anti-sigma spans 3–50 (NIGVIIKIEGNEAIVMTDDCSFKKVPIKDGMHPGQKILVPNNEVIQKE). A helical membrane pass occupies residues 57 to 77 (ISAVATGIAAVFLMVLSLIWI). At 78–644 (NKPGRPDGIY…VVPSKNLFAD (567 aa)) the chain is on the extracellular side. The segment covering 302-328 (PTNTPSISTKPSATPAENPTPKLTQKP) has biased composition (polar residues). Residues 302-359 (PTNTPSISTKPSATPAENPTPKLTQKPTPVPAKTGERTSTTPTPTPAPTVRNGTGSGL) form a disordered region. PA14 domains are found at residues 354-491 (GTGS…PSSQ) and 502-640 (KDVN…PSKN).

In terms of assembly, interacts (via RsgI N-terminal anti-sigma domain) with SigI3.

Its subcellular location is the cell membrane. Functionally, anti-sigma factor for SigI3. Negatively regulates SigI3 activity through direct interaction. Binding of the polysaccharide substrate to the extracellular C-terminal sensing domain of RsgI3 may induce a conformational change in its N-terminal cytoplasmic region, leading to the release and activation of SigI3. In Acetivibrio thermocellus (strain ATCC 27405 / DSM 1237 / JCM 9322 / NBRC 103400 / NCIMB 10682 / NRRL B-4536 / VPI 7372) (Clostridium thermocellum), this protein is Anti-sigma-I factor RsgI3.